The primary structure comprises 136 residues: Transcription antitermination protein NusB (136 aa).

It belongs to the NusB family.

Its function is as follows. Involved in transcription antitermination. Required for transcription of ribosomal RNA (rRNA) genes. Binds specifically to the boxA antiterminator sequence of the ribosomal RNA (rrn) operons. The sequence is that of Transcription antitermination protein NusB from Arthrobacter sp. (strain FB24).